A 610-amino-acid chain; its full sequence is Membrane protein insertase YidC (610 aa).

Residues 7–27 (FFITIALSILILALWQVFYLG) traverse the membrane as a helical segment. The tract at residues 36 to 82 (QARIEEQQRQAQQAAQNRQASSSTGDTPQMPANPDSIPGQGDTKAAG) is disordered. Residues 44–55 (RQAQQAAQNRQA) are compositionally biased toward low complexity. 5 helical membrane-spanning segments follow: residues 358 to 378 (FDLL…FYLI), 387 to 407 (NFGV…FPLA), 458 to 478 (WPVL…YVTI), 510 to 530 (TVPH…TMFL), and 546 to 566 (IFTW…AGLV).

Belongs to the OXA1/ALB3/YidC family. Type 1 subfamily. Interacts with the Sec translocase complex via SecD. Specifically interacts with transmembrane segments of nascent integral membrane proteins during membrane integration.

The protein resides in the cell inner membrane. Its function is as follows. Required for the insertion and/or proper folding and/or complex formation of integral membrane proteins into the membrane. Involved in integration of membrane proteins that insert both dependently and independently of the Sec translocase complex, as well as at least some lipoproteins. Aids folding of multispanning membrane proteins. In Brucella suis biovar 1 (strain 1330), this protein is Membrane protein insertase YidC.